The sequence spans 193 residues: dCTP deaminase (193 aa).

Residues 110-115, D128, 136-138, Y171, K178, and Q182 contribute to the dCTP site; these read RSSLAR and VLE. Catalysis depends on E138, which acts as the Proton donor/acceptor. Positions 173 to 193 are disordered; sequence KRKNAKYKDQQDAVASRISQD.

This sequence belongs to the dCTP deaminase family. As to quaternary structure, homotrimer.

It catalyses the reaction dCTP + H2O + H(+) = dUTP + NH4(+). Its pathway is pyrimidine metabolism; dUMP biosynthesis; dUMP from dCTP (dUTP route): step 1/2. Functionally, catalyzes the deamination of dCTP to dUTP. The protein is dCTP deaminase of Shewanella sp. (strain ANA-3).